The following is a 274-amino-acid chain: Probable S-adenosylmethionine-dependent methyltransferase MT3114 (274 aa).

The segment at 1-24 is disordered; that stretch reads MCAFVPHVPRHSRGDNPPSASTAS.

It belongs to the methyltransferase superfamily.

Its function is as follows. Probable S-adenosylmethionine-dependent methyltransferase required for the 6-O-methylation of the polysaccharide backbone of 6-O-methylglucosyl lipopolysaccharides (MGLP). The protein is Probable S-adenosylmethionine-dependent methyltransferase MT3114 of Mycobacterium tuberculosis (strain CDC 1551 / Oshkosh).